Consider the following 301-residue polypeptide: Protein RESTRICTED TEV MOVEMENT 3 (301 aa).

An MATH domain is found at 6–134; it reads DKKITWTIKN…NGELKIVVEI (129 aa). Residues 235 to 289 adopt a coiled-coil conformation; that stretch reads KLDWLEKKLYEVSEKKENEEASETGLQEMEEELKDMKQKCLEMEALVEKEKAKVS.

As to quaternary structure, self-interacts. Interacts with RTM1.

Functionally, required for the restriction of long-distance movement of the pathogenic tobacco etch virus (TEV) without causing a hypersensitive response or inducing systemic acquired resistance. The sequence is that of Protein RESTRICTED TEV MOVEMENT 3 (RTM3) from Arabidopsis thaliana (Mouse-ear cress).